The primary structure comprises 102 residues: Thioredoxin (102 aa).

Positions 2-102 constitute a Thioredoxin domain; the sequence is LHIDELTFEN…ILIHTINKYL (101 aa). Catalysis depends on nucleophile residues Cys-29 and Cys-32. An intrachain disulfide couples Cys-29 to Cys-32.

This sequence belongs to the thioredoxin family.

The protein localises to the plastid. It is found in the chloroplast. Its function is as follows. Participates in various redox reactions through the reversible oxidation of its active center dithiol to a disulfide and catalyzes dithiol-disulfide exchange reactions. The polypeptide is Thioredoxin (trxA) (Cyanidioschyzon merolae (strain NIES-3377 / 10D) (Unicellular red alga)).